A 212-amino-acid polypeptide reads, in one-letter code: Pyridoxine/pyridoxamine 5'-phosphate oxidase (212 aa).

FMN is bound by residues 57 to 62 (RMVLLK), 72 to 73 (YT), Arg78, Lys79, and Gln101. Lys62 serves as a coordination point for substrate. Substrate contacts are provided by Tyr119, Arg123, and Ser127. FMN contacts are provided by residues 136–137 (QS) and Trp181. 187–189 (RLH) contacts substrate. Arg191 contacts FMN.

The protein belongs to the pyridoxamine 5'-phosphate oxidase family. Homodimer. FMN is required as a cofactor.

The enzyme catalyses pyridoxamine 5'-phosphate + O2 + H2O = pyridoxal 5'-phosphate + H2O2 + NH4(+). The catalysed reaction is pyridoxine 5'-phosphate + O2 = pyridoxal 5'-phosphate + H2O2. Its pathway is cofactor metabolism; pyridoxal 5'-phosphate salvage; pyridoxal 5'-phosphate from pyridoxamine 5'-phosphate: step 1/1. The protein operates within cofactor metabolism; pyridoxal 5'-phosphate salvage; pyridoxal 5'-phosphate from pyridoxine 5'-phosphate: step 1/1. In terms of biological role, catalyzes the oxidation of either pyridoxine 5'-phosphate (PNP) or pyridoxamine 5'-phosphate (PMP) into pyridoxal 5'-phosphate (PLP). This is Pyridoxine/pyridoxamine 5'-phosphate oxidase from Erythrobacter litoralis (strain HTCC2594).